Consider the following 1423-residue polypeptide: ABC transporter G family member 40 (1423 aa).

A compositionally biased stretch (polar residues) spans 1-19 (MEGTSFHQASNSMRRNSSV). The segment at 1 to 36 (MEGTSFHQASNSMRRNSSVWKKDSGREIFSRSSREE) is disordered. Asn-16 is a glycosylation site (N-linked (GlcNAc...) asparagine). The segment covering 20–34 (WKKDSGREIFSRSSR) has biased composition (basic and acidic residues). In terms of domain architecture, ABC transporter 1 spans 154–427 (LNTLHLVPNR…FETMGFKCPP (274 aa)). 187–194 (GPPSSGKT) provides a ligand contact to ATP. N-linked (GlcNAc...) asparagine glycosylation is present at Asn-376. Residues 505 to 718 (ELVKTSFSRE…GQNAILANEF (214 aa)) form the ABC transmembrane type-2 1 domain. Helical transmembrane passes span 523 to 543 (FVYY…MTLF), 562 to 582 (ALFF…SMTI), 611 to 631 (IPIS…VIGF), 643 to 663 (ILLV…AALG), 667 to 687 (IVAN…GGVV), and 696 to 716 (WWIW…ILAN). Asn-729 is a glycosylation site (N-linked (GlcNAc...) asparagine). Residues 756–776 (GALLGFVVLFNFGFTLALTFL) traverse the membrane as a helical segment. Residues 825 to 1077 (ITFDNVVYSV…HLINYFESIQ (253 aa)) form the ABC transporter 2 domain. 870–877 (GVSGAGKT) serves as a coordination point for ATP. Asn-895 is a glycosylation site (N-linked (GlcNAc...) asparagine). Thr-962 is subject to Phosphothreonine. Positions 1150–1364 (TQCMASLWKQ…TLYGLIASQF (215 aa)) constitute an ABC transmembrane type-2 2 domain. The next 6 membrane-spanning stretches (helical) occupy residues 1174-1194 (FLFT…LGGK), 1207-1227 (SMYT…QPVV), 1257-1277 (IPYV…MIGF), 1284-1304 (FFWY…YGMM), 1314-1334 (IASV…GFLI), and 1341-1361 (VWWE…GLIA). N-linked (GlcNAc...) asparagine glycosylation is present at Asn-1375. A helical membrane pass occupies residues 1395–1415 (VVAAMNVIFPLLFAVIFAIGI).

The protein belongs to the ABC transporter superfamily. ABCG family. PDR (TC 3.A.1.205) subfamily. Interacts with LECRK91 and LECRK92. In terms of tissue distribution, mostly observed in inflorescence meristems relative to cauline leaves and developing siliques. Ubiquitous with higher levels in leaves, stems and flowers. Also present in primary and lateral roots. In seeds, mainly expressed in the embryo and, to a lesser extent, in the endosperm.

The protein localises to the cell membrane. It catalyses the reaction abscisate(out) + ATP + H2O = abscisate(in) + ADP + phosphate + H(+). Its activity is regulated as follows. Inhibited by glibenclamide, verapamil and vanadate (ABC transporters inhibitors). Functionally, high affinity abscisic acid (ABA) transporter that mediates the import of ABA, with a preference for (+)-ABA, through the plasma membrane, especially in guard cells, and is involved in the intercellular and intracellular ABA signaling pathways leading, for example, to stomatal closure, thus conferring drought tolerance. Together with ABCG30, import into the embryo the ABA delivered from the endosperm via ABCG25 and ABCG31-mediated export to suppress radicle extension and subsequent embryonic growth. May be a general defense protein. Functions as a pump to exclude Pb(2+) ions and/or Pb(2+)-containing toxic compounds from the cytoplasm. Contributes to Pb(2+) ions resistance. Confers some resistance to the terpene sclareol. (Microbial infection) Involved in resistance response to the pathogenic oomycetes Phytophthora infestans and Phytophthora capsici. The sequence is that of ABC transporter G family member 40 from Arabidopsis thaliana (Mouse-ear cress).